A 445-amino-acid polypeptide reads, in one-letter code: C4-dicarboxylate transport protein 2 (445 aa).

The next 8 membrane-spanning stretches (helical) occupy residues 24-44 (ILYV…WLFP), 62-82 (LIKM…IAHI), 96-116 (LVYF…VGNL), 163-183 (GDIL…MALG), 201-221 (FGVI…AMAF), 237-257 (LIAL…GLIA), 334-354 (ALGV…AMLT), and 366-386 (FITL…GMAI).

This sequence belongs to the dicarboxylate/amino acid:cation symporter (DAACS) (TC 2.A.23) family.

It is found in the cell inner membrane. Functionally, responsible for the transport of dicarboxylates such as succinate, fumarate, and malate from the periplasm across the membrane. In Bradyrhizobium sp. (strain ORS 278), this protein is C4-dicarboxylate transport protein 2.